The chain runs to 213 residues: Orotate phosphoribosyltransferase (213 aa).

Residue K26 participates in 5-phospho-alpha-D-ribose 1-diphosphate binding. 34–35 (FF) contacts orotate. Residues 72-73 (YK), R99, K100, K103, H105, and 124-132 (DDVITAGTA) each bind 5-phospho-alpha-D-ribose 1-diphosphate. Residues T128 and R156 each contribute to the orotate site.

This sequence belongs to the purine/pyrimidine phosphoribosyltransferase family. PyrE subfamily. As to quaternary structure, homodimer. Requires Mg(2+) as cofactor.

The catalysed reaction is orotidine 5'-phosphate + diphosphate = orotate + 5-phospho-alpha-D-ribose 1-diphosphate. The protein operates within pyrimidine metabolism; UMP biosynthesis via de novo pathway; UMP from orotate: step 1/2. Its function is as follows. Catalyzes the transfer of a ribosyl phosphate group from 5-phosphoribose 1-diphosphate to orotate, leading to the formation of orotidine monophosphate (OMP). This chain is Orotate phosphoribosyltransferase, found in Yersinia enterocolitica serotype O:8 / biotype 1B (strain NCTC 13174 / 8081).